A 1105-amino-acid chain; its full sequence is AP-3 complex subunit beta-1 (1105 aa).

Disordered stretches follow at residues 1–26 and 271–292; these read MSSN…EATS and KNFY…KKSY. Phosphoserine occurs at positions 276 and 610. Positions 668–824 are disordered; the sequence is KKEKPMKKFY…KPQQERHPPS (157 aa). The segment covering 679 to 704 has biased composition (acidic residues); that stretch reads ESEEEEDEDEDEDEEEEEKEDEDENP. Composition is skewed to low complexity over residues 705 to 722 and 730 to 741; these read SDSS…SGDT and DSSSGQDSETGS. The span at 750-759 shows a compositional bias: basic residues; sequence VAKRNSKTKR. Over residues 760–774 the composition is skewed to basic and acidic residues; it reads KSDSENREKKNENSK. Phosphoserine occurs at positions 761 and 763. The segment covering 775–788 has biased composition (low complexity); that stretch reads ASESSSEESSSMED. Residues 789-799 show a composition bias toward acidic residues; the sequence is SSSESESESGS. Residues 811–824 are compositionally biased toward basic and acidic residues; that stretch reads AKERKPQQERHPPS.

It belongs to the adaptor complexes large subunit family. Adaptor protein complex 3 (AP-3) is a heterotetramer composed of two large adaptins (delta-type subunit AP3D1 and beta-type subunit AP3B1 or AP3B2), a medium adaptin (mu-type subunit AP3M1 or AP3M2) and a small adaptin (sigma-type subunit APS1 or AP3S2). AP-3 associates with the BLOC-1 complex. Interacts with KIF3A; interaction is direct; interaction is impaired by pyrophosphorylation of AP3B1. Phosphorylated on serine residues. Post-translationally, pyrophosphorylated by 5-diphosphoinositol pentakisphosphate (5-IP7). Pyrophosphorylation impairs interaction with KIF3A. Serine pyrophosphorylation is achieved by Mg(2+)-dependent, but enzyme independent transfer of a beta-phosphate from a inositol pyrophosphate to a pre-phosphorylated serine residue. Ubiquitously expressed.

The protein localises to the cytoplasmic vesicle. Its subcellular location is the clathrin-coated vesicle membrane. It localises to the golgi apparatus. Its function is as follows. Subunit of non-clathrin- and clathrin-associated adaptor protein complex 3 (AP-3) that plays a role in protein sorting in the late-Golgi/trans-Golgi network (TGN) and/or endosomes. The AP complexes mediate both the recruitment of clathrin to membranes and the recognition of sorting signals within the cytosolic tails of transmembrane cargo molecules. AP-3 appears to be involved in the sorting of a subset of transmembrane proteins targeted to lysosomes and lysosome-related organelles. In concert with the BLOC-1 complex, AP-3 is required to target cargos into vesicles assembled at cell bodies for delivery into neurites and nerve terminals. This Mus musculus (Mouse) protein is AP-3 complex subunit beta-1 (Ap3b1).